The primary structure comprises 689 residues: uncharacterized protein (689 aa).

Disordered regions lie at residues 121–206 (LALK…VDPS), 286–305 (ASSN…PMDN), 322–414 (NSYS…SMAH), and 552–611 (AAMP…HLSD). Positions 133 to 158 (SPNNSIPLMANSCLLSADNSSSSTTS) are enriched in low complexity. Positions 322 to 380 (NSYSYDRYTPNQPSYLESKPGNHQPSYTSEQPMYSTASVPQQISNGPTAVNGLPMNSYT) are enriched in polar residues. Composition is skewed to low complexity over residues 381–411 (PHSN…SSPS) and 560–572 (PSAH…PSPH).

It localises to the cytoplasm. This is an uncharacterized protein from Schizosaccharomyces pombe (strain 972 / ATCC 24843) (Fission yeast).